A 962-amino-acid polypeptide reads, in one-letter code: Ubiquitin carboxyl-terminal hydrolase 4 (962 aa).

The DUSP domain maps to Pro11–Val122. Positions Thr27–Glu216 are necessary for interaction with SART3. Positions Val133–Lys141 match the Nuclear export signal motif. In terms of domain architecture, Ubiquitin-like 1 spans Leu142–Arg226. Positions Glu220 to Ala249 are disordered. Residues Pro225–Ala249 are compositionally biased toward polar residues. A required for USP4 activation by providing conformational flexibility between the DUSP and catalytic domains region spans residues Leu229–Pro295. Residues Cys302 to Arg922 enclose the USP domain. Cys311 serves as the catalytic Nucleophile. The tract at residues Pro384–Phe386 is regulates ubiquitin dissociation. The tract at residues Leu405–Glu407 is necessary for interaction with RBL2. A Phosphoserine modification is found at Ser445. The tract at residues Leu459–Glu463 is necessary for interaction with RB1 and RBL2. Residues Cys461 and Cys464 each coordinate Zn(2+). The Ubiquitin-like 2 domain maps to Leu483 to Ser571. The segment at Lys485–Ala774 is interacts with DUSP and ubiquitin-like 1 domains and is required for USP4 activation. Residues Glu638–Gln699 form a disordered region. Ser655 carries the post-translational modification Phosphoserine. The segment covering Glu657–His666 has biased composition (acidic residues). Residues Ser675 and Ser680 each carry the phosphoserine modification. The short motif at Gln766–Lys771 is the Nuclear localization signal element. Zn(2+)-binding residues include Cys798 and Cys801. Catalysis depends on His880, which acts as the Proton acceptor. Low complexity predominate over residues Ser928–Gly937. Positions Ser928–Asn962 are disordered. The span at Gly952–Asn962 shows a compositional bias: acidic residues.

Belongs to the peptidase C19 family. USP4 subfamily. In terms of assembly, interacts with RB1 (both dephosphorylated and hypophosphorylated forms). Interacts with RBL1 and RBL2. Interacts with ADORA2A (via cytoplasmic C-terminus); the interaction is direct. Interacts with SART3; recruits USP4 to its substrate PRPF3. In terms of processing, phosphorylated at Ser-445 by PKB/AKT1 in response to EGF stimulus, promoting its ability deubiquitinate RHEB. Post-translationally, monoubiquitinated by TRIM21. Ubiquitination does not lead to its proteasomal degradation. Autodeubiquitinated. As to expression, expressed in brain, kidney, liver and spleen (at protein level).

It is found in the cytoplasm. Its subcellular location is the nucleus. It carries out the reaction Thiol-dependent hydrolysis of ester, thioester, amide, peptide and isopeptide bonds formed by the C-terminal Gly of ubiquitin (a 76-residue protein attached to proteins as an intracellular targeting signal).. The completion of the deubiquitinase reaction is mediated by the DUSP and ubiquitin-like 1 domains which promotes the release of ubiquitin from the catalytic site enabling subsequent reactions to occur. Functionally, deubiquitinating enzyme that removes conjugated ubiquitin from target proteins. Deubiquitinates PDPK1. Deubiquitinates TRIM21. Deubiquitinates receptor ADORA2A which increases the amount of functional receptor at the cell surface. Deubiquitinates HAS2. Deubiquitinates RHEB in response to EGF signaling, promoting mTORC1 signaling. May regulate mRNA splicing through deubiquitination of the U4 spliceosomal protein PRPF3. This may prevent its recognition by the U5 component PRPF8 thereby destabilizing interactions within the U4/U6.U5 snRNP. May also play a role in the regulation of quality control in the ER. In Mus musculus (Mouse), this protein is Ubiquitin carboxyl-terminal hydrolase 4 (Usp4).